Reading from the N-terminus, the 103-residue chain is Matrix Gla protein (103 aa).

A signal peptide spans 1-19; the sequence is MKSLLLLSILAALAVAALC. Glu-21 is subject to 4-carboxyglutamate; partial. Phosphoserine is present on residues Ser-22, Ser-25, and Ser-28. Residues 51–97 form the Gla domain; that stretch reads RAKAQERIRELNKPQYELNREACDDFKLCERYAMVYGYNAAYDRYFR. A 4-carboxyglutamate mark is found at Glu-56, Glu-60, Glu-67, and Glu-71. An intrachain disulfide couples Cys-73 to Cys-79. The propeptide at 99–102 is removed in short form; probably by carboxypeptidase N; it reads RRGA. Position 103 (Lys-103) is a propeptide, removed in long form; probably by carboxypeptidase H.

The protein belongs to the osteocalcin/matrix Gla protein family. Requires vitamin K-dependent gamma-carboxylation for its function.

The protein localises to the secreted. Its function is as follows. Associates with the organic matrix of bone and cartilage. Thought to act as an inhibitor of bone formation. This Bos taurus (Bovine) protein is Matrix Gla protein (MGP).